The primary structure comprises 95 residues: RING finger protein Z (95 aa).

The N-myristoyl glycine; by host moiety is linked to residue glycine 2. An RING-type; atypical zinc finger spans residues 38 to 74 (CKSCWFANRGLIACSDHYLCLNCLTRLRSQSQFCGIC). Positions 88–91 (PSAP) match the PTAP/PSAP motif motif.

It belongs to the arenaviridae Z protein family. As to quaternary structure, interacts with protein NP; this interaction probably directs the encapsidated genome to budding sites. Interacts (via RING domain) with polymerase L; this interaction inhibits viral transcription and replication, Z partially blocks the product exit tunnel for the releasing nascent RNA product. Interacts with the glycoprotein complex; this interaction plays a role in virion budding. Interacts with host eIF4E; this interaction results in eIF4E reduced affinity for its substrate, the 5'-m7 G cap structure. Interacts (via late-budding domain) with host TSG101; this interaction is essential for budding and release of viral particles. Interacts with host RPLP0; this interaction may serve to load ribosome-like particles inside the virion. Interacts with host PML; this interaction induces PML bodies redistribution in the cytoplasm upon viral infection. Post-translationally, myristoylation is required for the role of RING finger protein Z in assembly and budding.

Its subcellular location is the virion. It is found in the host cytoplasm. It localises to the host perinuclear region. The protein resides in the host cell membrane. Its function is as follows. Plays a crucial role in virion assembly and budding. Expressed late in the virus life cycle, it acts as an inhibitor of viral transcription and RNA synthesis by interacting with the viral polymerase L. Presumably recruits the NP encapsidated genome to cellular membranes at budding sites via direct interaction with NP. Plays critical roles in the final steps of viral release by interacting with host TSG101, a member of the vacuolar protein-sorting pathway and using other cellular host proteins involved in vesicle formation pathway. The budding of the virus progeny occurs after association of protein Z with the viral glycoprotein complex SSP-GP1-GP2 at the cell periphery, step that requires myristoylation of protein Z. Also selectively represses protein production by associating with host eIF4E. In cell-based minigenome assay, has an inhibitory effect on the ribonucleoprotein machinery (vRNP), which is responsible for the replication and transcription of the viral genome. The protein is RING finger protein Z of Pirital mammarenavirus (isolate Rat/Venezuela/VAV-488/1995) (PIRV).